The following is an 874-amino-acid chain: Alanine--tRNA ligase (874 aa).

Residues His563, His567, Cys664, and His668 each contribute to the Zn(2+) site.

It belongs to the class-II aminoacyl-tRNA synthetase family. Zn(2+) serves as cofactor.

It localises to the cytoplasm. It carries out the reaction tRNA(Ala) + L-alanine + ATP = L-alanyl-tRNA(Ala) + AMP + diphosphate. Its function is as follows. Catalyzes the attachment of alanine to tRNA(Ala) in a two-step reaction: alanine is first activated by ATP to form Ala-AMP and then transferred to the acceptor end of tRNA(Ala). Also edits incorrectly charged Ser-tRNA(Ala) and Gly-tRNA(Ala) via its editing domain. This chain is Alanine--tRNA ligase, found in Methylobacillus flagellatus (strain ATCC 51484 / DSM 6875 / VKM B-1610 / KT).